Reading from the N-terminus, the 306-residue chain is 4-hydroxy-tetrahydrodipicolinate synthase (306 aa).

Thr-46 provides a ligand contact to pyruvate. Tyr-134 functions as the Proton donor/acceptor in the catalytic mechanism. The Schiff-base intermediate with substrate role is filled by Lys-162. Residue Val-204 coordinates pyruvate.

It belongs to the DapA family. As to quaternary structure, homotetramer; dimer of dimers.

It localises to the cytoplasm. The enzyme catalyses L-aspartate 4-semialdehyde + pyruvate = (2S,4S)-4-hydroxy-2,3,4,5-tetrahydrodipicolinate + H2O + H(+). Its pathway is amino-acid biosynthesis; L-lysine biosynthesis via DAP pathway; (S)-tetrahydrodipicolinate from L-aspartate: step 3/4. Functionally, catalyzes the condensation of (S)-aspartate-beta-semialdehyde [(S)-ASA] and pyruvate to 4-hydroxy-tetrahydrodipicolinate (HTPA). The chain is 4-hydroxy-tetrahydrodipicolinate synthase from Synechococcus sp. (strain JA-2-3B'a(2-13)) (Cyanobacteria bacterium Yellowstone B-Prime).